The primary structure comprises 185 residues: Tumor necrosis factor receptor superfamily member 17 (185 aa).

At 1-49 (MAQQCFHSEYFDSLLHACKPCHLRCSNPPATCQPYCDPSVTSSVKGTYT) the chain is on the extracellular side. A TNFR-Cys repeat occupies 4 to 36 (QCFHSEYFDSLLHACKPCHLRCSNPPATCQPYC). 3 cysteine pairs are disulfide-bonded: C5-C18, C21-C32, and C25-C36. Residues 50–70 (VLWIFLGLTLVLSLALFTISF) form a helical; Signal-anchor for type III membrane protein membrane-spanning segment. The Cytoplasmic portion of the chain corresponds to 71-185 (LLRKMNPEAL…MGMEKPTHTR (115 aa)).

As to quaternary structure, associates with TRAF1, TRAF2, TRAF3, TRAF5 and TRAF6. In terms of tissue distribution, detected in spleen, thymus, bone marrow and heart, and at lower levels in kidney and lung.

The protein localises to the membrane. Functionally, receptor for TNFSF13B/BLyS/BAFF and TNFSF13/APRIL. Promotes B-cell survival and plays a role in the regulation of humoral immunity. Activates NF-kappa-B and JNK. This Mus musculus (Mouse) protein is Tumor necrosis factor receptor superfamily member 17 (Tnfrsf17).